Reading from the N-terminus, the 506-residue chain is MMITLTGHTLTVEEMKRLLLEGEGVTACPTSMQKVAECREVVEKIVEDGKVVYGITTGFGKFSDVLIQKDDVKALQHNLIQSHACGIGDPFPEEVSRGMLILRANTMLKGVSGVRPLVVNMLLEFVNRKIHPVVPQQGSLGASGDLAPLSHLALVLLGEGEVFYKGKRVHAMVALTEEGLEPIELEAKEGLALINGTQAMTAQGVLSYIEAEATAYQAELIASMTIEGLQGIIDAFDENVHKARGYKEQVDVASRIRDILHDSKLTTKQGELRVQDAYSLRCIPQVHGASWQVLNYVKEKLEIEMNAATDNPLIFDGGEKVISGGNFHGQPIAFAMDFLKVGMAELANISERRIERLVNPQLNDLPPFLSPEPGLQSGAMIMQYAAASLVSENKTLAHPASVDSIPSSANQEDHVSMGTIASRHAHQIIQNVRRVLSIEMICAMQAAEYRGIENMSTVTKSFYHQGRQQVPSIKNDRIFSTDIENIAHWLKTNYSIKERLDVNAAL.

Positions A142–G144 form a cross-link, 5-imidazolinone (Ala-Gly). S143 carries the 2,3-didehydroalanine (Ser) modification.

Belongs to the PAL/histidase family. Contains an active site 4-methylidene-imidazol-5-one (MIO), which is formed autocatalytically by cyclization and dehydration of residues Ala-Ser-Gly.

It is found in the cytoplasm. It carries out the reaction L-histidine = trans-urocanate + NH4(+). It functions in the pathway amino-acid degradation; L-histidine degradation into L-glutamate; N-formimidoyl-L-glutamate from L-histidine: step 1/3. In Bacillus cereus (strain B4264), this protein is Histidine ammonia-lyase.